Here is a 137-residue protein sequence, read N- to C-terminus: Large-conductance mechanosensitive channel (137 aa).

Transmembrane regions (helical) follow at residues 10–30 (FAMR…AAFG) and 76–96 (GVFI…FMAI).

Belongs to the MscL family. In terms of assembly, homopentamer.

The protein localises to the cell inner membrane. Its function is as follows. Channel that opens in response to stretch forces in the membrane lipid bilayer. May participate in the regulation of osmotic pressure changes within the cell. The sequence is that of Large-conductance mechanosensitive channel from Escherichia coli O45:K1 (strain S88 / ExPEC).